An 83-amino-acid polypeptide reads, in one-letter code: Cell division topological specificity factor (83 aa).

The protein belongs to the MinE family.

Its function is as follows. Prevents the cell division inhibition by proteins MinC and MinD at internal division sites while permitting inhibition at polar sites. This ensures cell division at the proper site by restricting the formation of a division septum at the midpoint of the long axis of the cell. The sequence is that of Cell division topological specificity factor from Alcanivorax borkumensis (strain ATCC 700651 / DSM 11573 / NCIMB 13689 / SK2).